Consider the following 242-residue polypeptide: Uridylate kinase (242 aa).

Residue 15 to 18 participates in ATP binding; it reads KLSG. An involved in allosteric activation by GTP region spans residues 23 to 28; it reads GDEGFG. Gly57 is a UMP binding site. ATP-binding residues include Gly58 and Arg62. Residues Asp77 and 138–145 contribute to the UMP site; that span reads TGNPFCTT. ATP contacts are provided by Thr165, Tyr171, and Asp174.

This sequence belongs to the UMP kinase family. As to quaternary structure, homohexamer.

The protein resides in the cytoplasm. The catalysed reaction is UMP + ATP = UDP + ADP. It functions in the pathway pyrimidine metabolism; CTP biosynthesis via de novo pathway; UDP from UMP (UMPK route): step 1/1. With respect to regulation, allosterically activated by GTP. Inhibited by UTP. Its function is as follows. Catalyzes the reversible phosphorylation of UMP to UDP. This is Uridylate kinase from Shewanella sp. (strain MR-4).